The following is a 194-amino-acid chain: Protein phosphatase 1 regulatory subunit 1B (194 aa).

Met-1 is modified (N-acetylmethionine). The segment at 1–194 is disordered; it reads MDPKDRKKIQ…GEEPQHPSPP (194 aa). Phosphothreonine; by PKA is present on Thr-34. The segment covering 41-63 has biased composition (basic and acidic residues); it reads VSEHSSPEEEASPHQRTSGEGHH. Phosphoserine occurs at positions 45 and 46. Position 75 is a phosphothreonine (Thr-75). Residues 84–95 are compositionally biased toward polar residues; that stretch reads HLQTISNLSENQ. Phosphoserine occurs at positions 97 and 130. Over residues 113-131 the composition is skewed to acidic residues; the sequence is QEDDEEDEDEEEDEEEDSQ. Residues 160 to 170 show a composition bias toward basic and acidic residues; the sequence is PPLDEPQRDGN. A Phosphoserine modification is found at Ser-192.

It belongs to the protein phosphatase inhibitor 1 family. Post-translationally, dopamine- and cyclic AMP-regulated neuronal phosphoprotein. Phosphorylation of Thr-34 is required for activity.

The protein localises to the cytoplasm. Its function is as follows. Inhibitor of protein-phosphatase 1. The polypeptide is Protein phosphatase 1 regulatory subunit 1B (Ppp1r1b) (Mus musculus (Mouse)).